A 159-amino-acid polypeptide reads, in one-letter code: Large ribosomal subunit protein uL13 (159 aa).

Belongs to the universal ribosomal protein uL13 family. As to quaternary structure, part of the 50S ribosomal subunit.

In terms of biological role, this protein is one of the early assembly proteins of the 50S ribosomal subunit, although it is not seen to bind rRNA by itself. It is important during the early stages of 50S assembly. This is Large ribosomal subunit protein uL13 from Methanopyrus kandleri (strain AV19 / DSM 6324 / JCM 9639 / NBRC 100938).